Reading from the N-terminus, the 287-residue chain is Mitochondrial dicarboxylate carrier (287 aa).

3 Solcar repeats span residues 7 to 87, 100 to 187, and 196 to 279; these read SRWY…MRDY, NKVL…AKQL, and DNIF…LRKH. The next 3 membrane-spanning stretches (helical) occupy residues 9 to 29, 62 to 81, and 102 to 122; these read WYFGGLASCGAACCTHPLDLL, GLSASLCRQMTYSLTRFAIY, and VLLGGISGLTGGFVGTPADLV. At Lys158 the chain carries N6-acetyllysine. Helical transmembrane passes span 162–181, 202–222, and 254–274; these read GATMASSRGALVTVGQLSCY, FVSSFIAGGCATFLCQPLDVL, and GLFPAGIRLIPHTVLTFMFLE.

It belongs to the mitochondrial carrier (TC 2.A.29) family. Expressed at very high levels in white adipose tissue. And at low levels in brown adipose tissue, kidney and liver.

The protein localises to the mitochondrion inner membrane. It carries out the reaction (S)-malate(in) + phosphate(out) = (S)-malate(out) + phosphate(in). The enzyme catalyses malonate(out) + (S)-malate(in) = malonate(in) + (S)-malate(out). The catalysed reaction is (S)-malate(in) + succinate(out) = (S)-malate(out) + succinate(in). It catalyses the reaction (S)-malate(in) + sulfate(out) = (S)-malate(out) + sulfate(in). It carries out the reaction malonate(out) + phosphate(in) = malonate(in) + phosphate(out). The enzyme catalyses succinate(out) + phosphate(in) = succinate(in) + phosphate(out). The catalysed reaction is sulfate(out) + phosphate(in) = sulfate(in) + phosphate(out). It catalyses the reaction malonate(out) + succinate(in) = malonate(in) + succinate(out). With respect to regulation, regulated by circadian protein CLOCK (Circadian Locomotor Output Cycles Kaput). Functionally, catalyzes the electroneutral exchange or flux of physiologically important metabolites such as dicarboxylates (malonate, malate, succinate), inorganic sulfur-containing anions, and phosphate, across mitochondrial inner membrane. Plays an important role in gluconeogenesis, fatty acid metabolism, urea synthesis, and sulfur metabolism, particularly in liver, by supplying the substrates for the different metabolic processes. Regulates fatty acid release from adipocytes, and contributes to systemic insulin sensitivity. The chain is Mitochondrial dicarboxylate carrier from Mus musculus (Mouse).